The primary structure comprises 126 residues: Protein ApaG (126 aa).

Positions 2–126 (SDPRYQIDVS…FRLAVPGALH (125 aa)) constitute an ApaG domain.

The polypeptide is Protein ApaG (Ectopseudomonas mendocina (strain ymp) (Pseudomonas mendocina)).